Consider the following 131-residue polypeptide: Large ribosomal subunit protein bL17 (131 aa).

Belongs to the bacterial ribosomal protein bL17 family. Part of the 50S ribosomal subunit. Contacts protein L32.

The polypeptide is Large ribosomal subunit protein bL17 (Thermotoga maritima (strain ATCC 43589 / DSM 3109 / JCM 10099 / NBRC 100826 / MSB8)).